Here is a 351-residue protein sequence, read N- to C-terminus: Transaldolase (351 aa).

Lys-138 functions as the Schiff-base intermediate with substrate in the catalytic mechanism.

The protein belongs to the transaldolase family. Type 2 subfamily.

It localises to the cytoplasm. It catalyses the reaction D-sedoheptulose 7-phosphate + D-glyceraldehyde 3-phosphate = D-erythrose 4-phosphate + beta-D-fructose 6-phosphate. It functions in the pathway carbohydrate degradation; pentose phosphate pathway; D-glyceraldehyde 3-phosphate and beta-D-fructose 6-phosphate from D-ribose 5-phosphate and D-xylulose 5-phosphate (non-oxidative stage): step 2/3. Transaldolase is important for the balance of metabolites in the pentose-phosphate pathway. The chain is Transaldolase from Neisseria gonorrhoeae (strain ATCC 700825 / FA 1090).